The sequence spans 311 residues: Urease accessory protein UreD (311 aa).

Belongs to the UreD family. In terms of assembly, ureD, UreF and UreG form a complex that acts as a GTP-hydrolysis-dependent molecular chaperone, activating the urease apoprotein by helping to assemble the nickel containing metallocenter of UreC. The UreE protein probably delivers the nickel.

It localises to the cytoplasm. In terms of biological role, required for maturation of urease via the functional incorporation of the urease nickel metallocenter. The sequence is that of Urease accessory protein UreD from Synechococcus sp. (strain CC9605).